Here is a 126-residue protein sequence, read N- to C-terminus: Holo-[acyl-carrier-protein] synthase (126 aa).

Mg(2+) is bound by residues Asp-9 and Glu-57.

This sequence belongs to the P-Pant transferase superfamily. AcpS family. Requires Mg(2+) as cofactor.

The protein localises to the cytoplasm. It catalyses the reaction apo-[ACP] + CoA = holo-[ACP] + adenosine 3',5'-bisphosphate + H(+). Transfers the 4'-phosphopantetheine moiety from coenzyme A to a Ser of acyl-carrier-protein. This chain is Holo-[acyl-carrier-protein] synthase, found in Alteromonas mediterranea (strain DSM 17117 / CIP 110805 / LMG 28347 / Deep ecotype).